Here is a 455-residue protein sequence, read N- to C-terminus: Virion host shutoff protein (455 aa).

The protein belongs to the herpesviridae VHS protein family.

It is found in the virion. Minor structural protein that acts as an endoribonuclease during lytic infection. Degrades host mRNAs in the cytoplasm by cutting them at preferred sites, including some in regions of translation initiation. The protein is Virion host shutoff protein (17) of Homo sapiens (Human).